A 400-amino-acid chain; its full sequence is NADH dehydrogenase-like protein MT1860 (400 aa).

Belongs to the NADH dehydrogenase family. FAD serves as cofactor.

The protein is NADH dehydrogenase-like protein MT1860 of Mycobacterium tuberculosis (strain CDC 1551 / Oshkosh).